The following is a 189-amino-acid chain: Mediator of RNA polymerase II transcription subunit 10b (189 aa).

The interval 1-22 (MDPTQNTSAGIGGSNGTIRYQT) is disordered.

The protein belongs to the Mediator complex subunit 10 family. In terms of assembly, component of the Mediator complex.

The protein localises to the nucleus. Its function is as follows. Component of the Mediator complex, a coactivator involved in the regulated transcription of nearly all RNA polymerase II-dependent genes. Mediator functions as a bridge to convey information from gene-specific regulatory proteins to the basal RNA polymerase II transcription machinery. The Mediator complex, having a compact conformation in its free form, is recruited to promoters by direct interactions with regulatory proteins and serves for the assembly of a functional preinitiation complex with RNA polymerase II and the general transcription factors. In Arabidopsis thaliana (Mouse-ear cress), this protein is Mediator of RNA polymerase II transcription subunit 10b (MED10B).